Reading from the N-terminus, the 635-residue chain is Threonine--tRNA ligase (635 aa).

One can recognise a TGS domain in the interval 1–61 (MVSIRLPDGS…DRDASLAIVT (61 aa)). The interval 242–533 (DHRKLGKQLD…LIEHHAGAMP (292 aa)) is catalytic. The Zn(2+) site is built by Cys-333, His-384, and His-510.

It belongs to the class-II aminoacyl-tRNA synthetase family. In terms of assembly, homodimer. Requires Zn(2+) as cofactor.

It localises to the cytoplasm. It carries out the reaction tRNA(Thr) + L-threonine + ATP = L-threonyl-tRNA(Thr) + AMP + diphosphate + H(+). Functionally, catalyzes the attachment of threonine to tRNA(Thr) in a two-step reaction: L-threonine is first activated by ATP to form Thr-AMP and then transferred to the acceptor end of tRNA(Thr). Also edits incorrectly charged L-seryl-tRNA(Thr). This is Threonine--tRNA ligase from Burkholderia orbicola (strain MC0-3).